The chain runs to 319 residues: Beta-ketoacyl-[acyl-carrier-protein] synthase III (319 aa).

Residues cysteine 114 and histidine 246 contribute to the active site. Residues 247–251 (QANIR) form an ACP-binding region. Asparagine 276 is a catalytic residue.

Belongs to the thiolase-like superfamily. FabH family. Homodimer.

It localises to the cytoplasm. The catalysed reaction is malonyl-[ACP] + acetyl-CoA + H(+) = 3-oxobutanoyl-[ACP] + CO2 + CoA. Its pathway is lipid metabolism; fatty acid biosynthesis. Catalyzes the condensation reaction of fatty acid synthesis by the addition to an acyl acceptor of two carbons from malonyl-ACP. Catalyzes the first condensation reaction which initiates fatty acid synthesis and may therefore play a role in governing the total rate of fatty acid production. Possesses both acetoacetyl-ACP synthase and acetyl transacylase activities. Its substrate specificity determines the biosynthesis of branched-chain and/or straight-chain of fatty acids. The chain is Beta-ketoacyl-[acyl-carrier-protein] synthase III from Thiobacillus denitrificans (strain ATCC 25259 / T1).